The following is a 558-amino-acid chain: MDIFRILSRGASLKKSKDVTTDYALPSAKQQQYEQHKEDTLQHQVDKEIDFFHTKKHNSSKSFDSTDSKHTKEEKKEKKEDEEAPPLEIQTVEDSIKLRKANHSKVTGEDIPLPIGSFQDMIGRFRLDSKLLSNLLEAEFVEPTAIQCESLPISLSGRDLIACAPTGSGKTLAFLIPLIQSLLVSSKGRPKNYGITGLVISPTNELAIQIFQELQILTRGKKLNVAILSKQLANKLNNDIVKASKYDIIVSTPLRLIDIVKNEKVDLSKVEQLVIDEADKLFDQGFVEQTDDILSHCTYTKIRKSMFSATIPSGVEEMAHSIMRDPIRVIIGRKEAASNTIDQKLVFTGSEEGKLLAIRQMIQEGEFKPPIIIFLQSIHRAKALFHELLYDKLNVDVIHAERTPKQREEVIKRFKNGDIWVLITTDVLARGVDFKGVNMVINYDVPQTAQAYVHRIGRTGRGGKAGRAVTFFTKEDDQAVKPIINVMKQSGCEAGFSGWMENMTKMSKNEKKKVKHKEIDRKDISTVPKLVKHKRKQREQMIEASKKRKQEETRNALQ.

The segment at 26 to 91 is disordered; sequence PSAKQQQYEQ…EEAPPLEIQT (66 aa). Composition is skewed to basic and acidic residues over residues 34 to 53 and 64 to 81; these read EQHK…DFFH and DSTD…KKED. A Q motif motif is present at residues 120–148; it reads DMIGRFRLDSKLLSNLLEAEFVEPTAIQC. A Helicase ATP-binding domain is found at 151-329; the sequence is LPISLSGRDL…HSIMRDPIRV (179 aa). Position 164–171 (164–171) interacts with ATP; that stretch reads APTGSGKT. Positions 276-279 match the DEAD box motif; sequence DEAD. The Helicase C-terminal domain occupies 340-504; sequence TIDQKLVFTG…GFSGWMENMT (165 aa). The disordered stretch occupies residues 509 to 558; the sequence is NEKKKVKHKEIDRKDISTVPKLVKHKRKQREQMIEASKKRKQEETRNALQ. Residues 538 to 558 show a composition bias toward basic and acidic residues; the sequence is REQMIEASKKRKQEETRNALQ.

Belongs to the DEAD box helicase family. DDX52/ROK1 subfamily. Interacts with the U3 snoRNA and is associated with the 90S and 40S pre-ribosomes.

Its subcellular location is the nucleus. It localises to the nucleolus. It carries out the reaction ATP + H2O = ADP + phosphate + H(+). ATP-dependent RNA helicase involved in 40S ribosomal subunit biogenesis. Required for the processing and cleavage of 35S pre-rRNA at sites A0, A1, and A2, leading to mature 18S rRNA. This chain is ATP-dependent RNA helicase ROK1 (ROK1), found in Scheffersomyces stipitis (strain ATCC 58785 / CBS 6054 / NBRC 10063 / NRRL Y-11545) (Yeast).